A 215-amino-acid polypeptide reads, in one-letter code: Cytochrome b6 (215 aa).

A helical membrane pass occupies residues 32 to 52; sequence IFYCLGGITLTCFLVQVATGF. C35 contacts heme c. Heme b is bound by residues H86 and H100. 3 helical membrane-spanning segments follow: residues 90–110, 116–136, and 186–206; these read ASMM…TGGF, LTWV…VTGY, and LHTF…FLMI. Residues H187 and H202 each contribute to the heme b site.

This sequence belongs to the cytochrome b family. PetB subfamily. As to quaternary structure, the 4 large subunits of the cytochrome b6-f complex are cytochrome b6, subunit IV (17 kDa polypeptide, PetD), cytochrome f and the Rieske protein, while the 4 small subunits are PetG, PetL, PetM and PetN. The complex functions as a dimer. Requires heme b as cofactor. Heme c serves as cofactor.

It localises to the plastid. It is found in the chloroplast thylakoid membrane. Functionally, component of the cytochrome b6-f complex, which mediates electron transfer between photosystem II (PSII) and photosystem I (PSI), cyclic electron flow around PSI, and state transitions. This chain is Cytochrome b6, found in Physcomitrium patens (Spreading-leaved earth moss).